The chain runs to 197 residues: Phospholipid hydroperoxide glutathione peroxidase GPX4 (197 aa).

The residue at position 40 (Ser40) is a Phosphoserine. The active site involves Sec73. Position 73 (Sec73) is a non-standard amino acid, selenocysteine.

It belongs to the glutathione peroxidase family. Monomer. Has a tendency to form higher mass oligomers. Interacts with FUNDC1; this interaction promotes GPX4 recruitment into mitochondria through TOM/TIM complex where it is degraded by mitophagy. As to expression, widely expressed with the highest levels in testis, heart, cerebrum, ileum, stomach, liver, jejunum and epididymis. Expressed primarily in testis and sperm midpiece (at protein level). Expressed in brain (at protein level). Expressed in heart, liver and kidney (at protein level). Expressed in retina, especially in inner segments of photoreceptor cells (at protein level). In terms of tissue distribution, highly expressed during embryogenesis. Down-regulated between 14.5 dpc and 17.5 dpc. Highly expressed during embryogenesis. In contrast to isoform Mitochondrial and isoform Nuclear, which are down-regulated between 14.5 dpc and 17.5 dpc, remains constant. As to expression, mainly expressed in sperm. Weakly expressed during embryogenesis. Down-regulated between 14.5 dpc and 17.5 dpc.

It localises to the mitochondrion. It is found in the cytoplasm. The protein localises to the nucleus. The enzyme catalyses a hydroperoxy polyunsaturated fatty acid + 2 glutathione = a hydroxy polyunsaturated fatty acid + glutathione disulfide + H2O. It catalyses the reaction 2 glutathione + H2O2 = glutathione disulfide + 2 H2O. It carries out the reaction tert-butyl hydroperoxide + 2 glutathione = tert-butanol + glutathione disulfide + H2O. The catalysed reaction is cumene hydroperoxide + 2 glutathione = 2-phenylpropan-2-ol + glutathione disulfide + H2O. The enzyme catalyses (9S)-hydroperoxy-(10E,12Z)-octadecadienoate + 2 glutathione = (9S)-hydroxy-(10E,12Z)-octadecadienoate + glutathione disulfide + H2O. It catalyses the reaction (13S)-hydroperoxy-(9Z,11E)-octadecadienoate + 2 glutathione = (13S)-hydroxy-(9Z,11E)-octadecadienoate + glutathione disulfide + H2O. It carries out the reaction (5S)-hydroperoxy-(6E,8Z,11Z,14Z)-eicosatetraenoate + 2 glutathione = (5S)-hydroxy-(6E,8Z,11Z,14Z)-eicosatetraenoate + glutathione disulfide + H2O. The catalysed reaction is (12R)-hydroperoxy-(5Z,8Z,10E,14Z)-eicosatetraenoate + 2 glutathione = (12R)-hydroxy-(5Z,8Z,10E,14Z)-eicosatetraenoate + glutathione disulfide + H2O. The enzyme catalyses (12S)-hydroperoxy-(5Z,8Z,10E,14Z)-eicosatetraenoate + 2 glutathione = (12S)-hydroxy-(5Z,8Z,10E,14Z)-eicosatetraenoate + glutathione disulfide + H2O. It catalyses the reaction (15S)-hydroperoxy-(5Z,8Z,11Z,13E)-eicosatetraenoate + 2 glutathione = (15S)-hydroxy-(5Z,8Z,11Z,13E)-eicosatetraenoate + glutathione disulfide + H2O. It carries out the reaction (5S)-hydroperoxy-(6E,8Z,11Z,14Z,17Z)-eicosapentaenoate + 2 glutathione = (5S)-hydroxy-(6E,8Z,11Z,14Z,17Z)-eicosapentaenoate + glutathione disulfide + H2O. The catalysed reaction is (12S)-hydroperoxy-(5Z,8Z,10E,14Z,17Z)-eicosapentaenoate + 2 glutathione = (12S)-hydroxy-(5Z,8Z,10E,14Z,17Z)-eicosapentaenoate + glutathione disulfide + H2O. The enzyme catalyses (15S)-hydroperoxy-(5Z,8Z,11Z,13E,17Z)-eicosapentaenoate + 2 glutathione = (15S)-hydroxy-(5Z,8Z,11Z,13E,17Z)-eicosapentaenoate + glutathione disulfide + H2O. It catalyses the reaction (15S)-hydroperoxy-(11Z,13E)-eicosadienoate + 2 glutathione = (15S)-hydroxy-(11Z,13E)-eicosadienoate + glutathione disulfide + H2O. It carries out the reaction (17S)-hydroperoxy-(4Z,7Z,10Z,13Z,15E,19Z)-docosahexaenoate + 2 glutathione = (17S)-hydroxy-(4Z,7Z,10Z,13Z,15E,19Z)-docosahexaenoate + glutathione disulfide + H2O. The catalysed reaction is a hydroperoxy-1,2-diacyl-glycero-3-phosphocholine + 2 glutathione = a hydroxy-1,2-diacyl-glycero-3-phosphocholine + glutathione disulfide + H2O. Its function is as follows. Essential antioxidant peroxidase that directly reduces phospholipid hydroperoxide even if they are incorporated in membranes and lipoproteins. Can also reduce fatty acid hydroperoxide, cholesterol hydroperoxide and thymine hydroperoxide. Plays a key role in protecting cells from oxidative damage by preventing membrane lipid peroxidation. Required to prevent cells from ferroptosis, a non-apoptotic cell death resulting from an iron-dependent accumulation of lipid reactive oxygen species. The presence of selenocysteine (Sec) versus Cys at the active site is essential for life: it provides resistance to overoxidation and prevents cells against ferroptosis. The presence of Sec at the active site is also essential for the survival of a specific type of parvalbumin-positive interneurons, thereby preventing against fatal epileptic seizures. May be required to protect cells from the toxicity of ingested lipid hydroperoxides. Required for normal sperm development and male fertility. Essential for maturation and survival of photoreceptor cells. Plays a role in a primary T-cell response to viral and parasitic infection by protecting T-cells from ferroptosis and by supporting T-cell expansion. Plays a role of glutathione peroxidase in platelets in the arachidonic acid metabolism. Reduces hydroperoxy ester lipids formed by a 15-lipoxygenase that may play a role as down-regulator of the cellular 15-lipoxygenase pathway. Can also reduce small soluble hydroperoxides such as H2O2 and tert-butyl hydroperoxide. Specifically able to suppress the production of leukotriene and prostaglandin in response to several stimuli by reducing fatty acid hydroperoxide. In terms of biological role, specifically required to prevent mitochondrial cell death by mediating reduction of cardiolipin hydroperoxide. Also required for normal sperm development and male fertility. Functionally, required for male fertility by stabilizing the condensed chromatin in sperm nuclei. The protein is Phospholipid hydroperoxide glutathione peroxidase GPX4 of Mus musculus (Mouse).